A 213-amino-acid polypeptide reads, in one-letter code: Superoxide dismutase [Mn] (213 aa).

Residues His-27, His-82, Asp-168, and His-172 each contribute to the Mn(2+) site.

It belongs to the iron/manganese superoxide dismutase family. As to quaternary structure, homodimer.

The catalysed reaction is 2 superoxide + 2 H(+) = H2O2 + O2. With respect to regulation, inhibited by hydrogen peroxide. In terms of biological role, destroys superoxide anion radicals which are normally produced within the cells and which are toxic to biological systems. In Haemophilus ducreyi (strain 35000HP / ATCC 700724), this protein is Superoxide dismutase [Mn] (sodA).